A 510-amino-acid chain; its full sequence is Ribonuclease Y (510 aa).

A helical membrane pass occupies residues 1–21; it reads MLIYILSGLGVLVGALLGYVV. The region spanning 200-260 is the KH domain; sequence TVSTIMLPND…LRREIAKRTI (61 aa). Positions 326–419 constitute an HD domain; it reads VLNHSIEVAL…VAAADALSAA (94 aa).

The protein belongs to the RNase Y family.

It localises to the cell membrane. Its function is as follows. Endoribonuclease that initiates mRNA decay. This is Ribonuclease Y from Thermosipho melanesiensis (strain DSM 12029 / CIP 104789 / BI429).